We begin with the raw amino-acid sequence, 498 residues long: Beta-1,3-glucosyltransferase (498 aa).

At 1–6 the chain is on the cytoplasmic side; that stretch reads MRPPAC. Residues 7–27 form a helical; Signal-anchor for type II membrane protein membrane-spanning segment; it reads WWLLAPPALLALLTCSLAFGL. The Lumenal segment spans residues 28–498; the sequence is ASEDTKKEVK…ETQKGFREEL (471 aa). Residue N336 is glycosylated (N-linked (GlcNAc...) asparagine). Positions 495–498 match the Prevents secretion from ER motif; sequence REEL.

Belongs to the glycosyltransferase 31 family. In terms of tissue distribution, widely expressed, with highest levels in testis and uterus.

It localises to the endoplasmic reticulum membrane. The protein operates within protein modification; protein glycosylation. O-glucosyltransferase that transfers glucose toward fucose with a beta-1,3 linkage. Specifically glucosylates O-linked fucosylglycan on TSP type-1 domains of proteins, thereby contributing to elongation of O-fucosylglycan. The chain is Beta-1,3-glucosyltransferase from Homo sapiens (Human).